A 682-amino-acid chain; its full sequence is Potassium-transporting ATPase ATP-binding subunit (682 aa).

Transmembrane regions (helical) follow at residues Pro-34 to Ala-54, Ala-62 to Ala-82, Ile-219 to Leu-239, and Val-254 to Ile-274. Asp-307 functions as the 4-aspartylphosphate intermediate in the catalytic mechanism. ATP contacts are provided by residues Asp-344, Glu-348, Phe-377 to Ser-384, and Lys-395. The Mg(2+) site is built by Asp-518 and Asp-522. The next 3 helical transmembrane spans lie at Phe-588–Met-608, Ala-616–Leu-636, and Ile-656–Leu-676.

It belongs to the cation transport ATPase (P-type) (TC 3.A.3) family. Type IA subfamily. The system is composed of three essential subunits: KdpA, KdpB and KdpC.

Its subcellular location is the cell inner membrane. It carries out the reaction K(+)(out) + ATP + H2O = K(+)(in) + ADP + phosphate + H(+). Part of the high-affinity ATP-driven potassium transport (or Kdp) system, which catalyzes the hydrolysis of ATP coupled with the electrogenic transport of potassium into the cytoplasm. This subunit is responsible for energy coupling to the transport system and for the release of the potassium ions to the cytoplasm. This Escherichia fergusonii (strain ATCC 35469 / DSM 13698 / CCUG 18766 / IAM 14443 / JCM 21226 / LMG 7866 / NBRC 102419 / NCTC 12128 / CDC 0568-73) protein is Potassium-transporting ATPase ATP-binding subunit.